A 435-amino-acid chain; its full sequence is Glutamyl-tRNA reductase (435 aa).

Residues 50–53 (TCNR), serine 110, 115–117 (ESQ), and glutamine 121 each bind substrate. The active-site Nucleophile is the cysteine 51. 191-196 (GAGDMG) lines the NADP(+) pocket.

The protein belongs to the glutamyl-tRNA reductase family. As to quaternary structure, homodimer.

The enzyme catalyses (S)-4-amino-5-oxopentanoate + tRNA(Glu) + NADP(+) = L-glutamyl-tRNA(Glu) + NADPH + H(+). It functions in the pathway porphyrin-containing compound metabolism; protoporphyrin-IX biosynthesis; 5-aminolevulinate from L-glutamyl-tRNA(Glu): step 1/2. Catalyzes the NADPH-dependent reduction of glutamyl-tRNA(Glu) to glutamate 1-semialdehyde (GSA). The protein is Glutamyl-tRNA reductase of Sulfurovum sp. (strain NBC37-1).